Reading from the N-terminus, the 506-residue chain is MRRQADRESVLPDYVKVLKPLPFNFSNFSNRQLFANFKMTDFCLLSALDLAQLVRTRQVSPLEITQYYLDRLGKYDQTVGSFAHVAWESAIADAKQKTKYLAGMGNSEPLPPFFGVPIAVKDLNCVADMPVSYGVSALKENLATYDDGVVAKMKAAGFTIVGKTVTSQLGSFPYTEPPGFLPARNPWHLDYNAGGSSGGSAAAVAAGLVPIAQGSDGGGSVRTPAACCSLVGFKPSRGRVSQAPVGDYQSGIACHGPLSRTVLEAAALLDVMEGYITGDPYWLPSPDRPFVETTGETPGQLRLAYAFSLPPFSSSSEIQGAVAKVIAVCENLGHQLEEACFDVTSLIEPFAQIWKAGVGASGIPLPLLESVNQWLGETSGTAGDYLRGVRNMQVISRQIVGFMEQYDALILPVFNHRPPKIGEWTHLSPPDVVQKIIEWIAPCPPANAAGLPAIAIPVGFDDQGLPLSVQIIGKPAADALVLALAHQMEQQLQGNQPRQLPLQFMP.

Catalysis depends on charge relay system residues Lys121 and Ser196. Ser220 serves as the catalytic Acyl-ester intermediate.

The protein belongs to the amidase family.

It carries out the reaction a monocarboxylic acid amide + H2O = a monocarboxylate + NH4(+). In Synechocystis sp. (strain ATCC 27184 / PCC 6803 / Kazusa), this protein is Putative amidase.